Consider the following 273-residue polypeptide: Light-independent protochlorophyllide reductase iron-sulfur ATP-binding protein (273 aa).

Residues Gly12–Thr17 and Lys41 each bind ATP. Ser16 serves as a coordination point for Mg(2+). The [4Fe-4S] cluster site is built by Cys97 and Cys131. Asn182–Arg183 serves as a coordination point for ATP.

This sequence belongs to the NifH/BchL/ChlL family. Homodimer. Protochlorophyllide reductase is composed of three subunits; BchL, BchN and BchB. [4Fe-4S] cluster serves as cofactor.

The catalysed reaction is chlorophyllide a + oxidized 2[4Fe-4S]-[ferredoxin] + 2 ADP + 2 phosphate = protochlorophyllide a + reduced 2[4Fe-4S]-[ferredoxin] + 2 ATP + 2 H2O. It participates in porphyrin-containing compound metabolism; bacteriochlorophyll biosynthesis (light-independent). Its function is as follows. Component of the dark-operative protochlorophyllide reductase (DPOR) that uses Mg-ATP and reduced ferredoxin to reduce ring D of protochlorophyllide (Pchlide) to form chlorophyllide a (Chlide). This reaction is light-independent. The L component serves as a unique electron donor to the NB-component of the complex, and binds Mg-ATP. The sequence is that of Light-independent protochlorophyllide reductase iron-sulfur ATP-binding protein from Chloroflexus aurantiacus (strain ATCC 29364 / DSM 637 / Y-400-fl).